A 99-amino-acid polypeptide reads, in one-letter code: MALTKAEMAEHLFETLGINKRVAKEMVESFFEEIREALESGEQVKLSGFGNFDLRDKNQRPGRNPKTGEDIPISARRVVTFRPGQKLKSRVEAANSGKK.

The tract at residues 49 to 71 (FGNFDLRDKNQRPGRNPKTGEDI) is disordered.

The protein belongs to the bacterial histone-like protein family. As to quaternary structure, heterodimer of an alpha and a beta chain.

This protein is one of the two subunits of integration host factor, a specific DNA-binding protein that functions in genetic recombination as well as in transcriptional and translational control. The polypeptide is Integration host factor subunit alpha (Shewanella frigidimarina (strain NCIMB 400)).